A 952-amino-acid chain; its full sequence is Inter-alpha-trypsin inhibitor heavy chain H5 (952 aa).

An N-terminal signal peptide occupies residues 1-17 (MLLLLGLCLGLPLFSES). One can recognise a VIT domain in the interval 35–161 (VPRQLRLLQR…KAAFFLSYEE (127 aa)). N97, N127, N136, and N231 each carry an N-linked (GlcNAc...) asparagine glycan. Positions 113-131 (QKDKKSSESVKDKRNRTSD) are enriched in basic and acidic residues. Positions 113–138 (QKDKKSSESVKDKRNRTSDDNEENGS) are disordered. Residues 295-478 (NVVFVLDISA…AQLIGFYDEI (184 aa)) enclose the VWFA domain. N508, N776, N795, and N862 each carry an N-linked (GlcNAc...) asparagine glycan. The interval 933-952 (ALGLSTPRKPETDRPHEESV) is disordered. The span at 940–952 (RKPETDRPHEESV) shows a compositional bias: basic and acidic residues.

Belongs to the ITIH family.

Its subcellular location is the secreted. May act as a tumor suppressor. The protein is Inter-alpha-trypsin inhibitor heavy chain H5 (Itih5) of Mus musculus (Mouse).